Here is an 84-residue protein sequence, read N- to C-terminus: UPF0457 protein BC_3525 (84 aa).

Belongs to the UPF0457 family.

The chain is UPF0457 protein BC_3525 from Bacillus cereus (strain ATCC 14579 / DSM 31 / CCUG 7414 / JCM 2152 / NBRC 15305 / NCIMB 9373 / NCTC 2599 / NRRL B-3711).